A 438-amino-acid polypeptide reads, in one-letter code: Serine--tRNA ligase (438 aa).

243-245 (TAE) provides a ligand contact to L-serine. 274–276 (RSE) contacts ATP. An L-serine-binding site is contributed by Glu297. Position 361-364 (361-364 (EISS)) interacts with ATP. L-serine is bound at residue Ser396.

This sequence belongs to the class-II aminoacyl-tRNA synthetase family. Type-1 seryl-tRNA synthetase subfamily. In terms of assembly, homodimer. The tRNA molecule binds across the dimer.

The protein resides in the cytoplasm. It catalyses the reaction tRNA(Ser) + L-serine + ATP = L-seryl-tRNA(Ser) + AMP + diphosphate + H(+). The catalysed reaction is tRNA(Sec) + L-serine + ATP = L-seryl-tRNA(Sec) + AMP + diphosphate + H(+). It functions in the pathway aminoacyl-tRNA biosynthesis; selenocysteinyl-tRNA(Sec) biosynthesis; L-seryl-tRNA(Sec) from L-serine and tRNA(Sec): step 1/1. Its function is as follows. Catalyzes the attachment of serine to tRNA(Ser). Is also able to aminoacylate tRNA(Sec) with serine, to form the misacylated tRNA L-seryl-tRNA(Sec), which will be further converted into selenocysteinyl-tRNA(Sec). The protein is Serine--tRNA ligase of Ralstonia pickettii (strain 12J).